A 122-amino-acid chain; its full sequence is MIQIQSYLDVADNSGARKLMCIRVLGTGNRKYADIGDIIIAVVKEAVPNMFLKRSEVVRAVVVRTRRGLKRRNGMVLEFDDNAAVIINQEGNPRGTRIFGPVARELRECNFARVVSLAPEVL.

The protein belongs to the universal ribosomal protein uL14 family. As to quaternary structure, part of the 50S ribosomal subunit.

It is found in the plastid. The protein localises to the chloroplast. Binds to 23S rRNA. This chain is Large ribosomal subunit protein uL14c, found in Adiantum capillus-veneris (Maidenhair fern).